Reading from the N-terminus, the 354-residue chain is Protein-arginine kinase (354 aa).

One can recognise a Phosphagen kinase C-terminal domain in the interval 24–254 (IVLSSRIRLA…QQIIHQEKTA (231 aa)). ATP-binding positions include 27 to 31 (SSRIR), H92, R125, 176 to 180 (RASVM), and 207 to 212 (RGIYGE). The short motif at 337–342 (RDYRRA) is the RDXXRA motif of the pArg binding pocket involved in allosteric regulation element.

It belongs to the ATP:guanido phosphotransferase family.

The enzyme catalyses L-arginyl-[protein] + ATP = N(omega)-phospho-L-arginyl-[protein] + ADP + H(+). Its activity is regulated as follows. Appears to be allosterically activated by the binding of pArg-containing polypeptides to the pArg-binding pocket localized in the C-terminal domain of McsB. Catalyzes the specific phosphorylation of arginine residues in a large number of proteins. Is part of the bacterial stress response system. Protein arginine phosphorylation has a physiologically important role and is involved in the regulation of many critical cellular processes, such as protein homeostasis, motility, competence, and stringent and stress responses, by regulating gene expression and protein activity. In Bacillus mycoides (strain KBAB4) (Bacillus weihenstephanensis), this protein is Protein-arginine kinase.